The primary structure comprises 335 residues: MVEKIWFDNHPLKYLLWPLLWPLSLLFGAISKSKRQQYQSGKKQAYKAPVPVVVVGNITAGGNGKTPVVVWLVEQLQQLGYKPGVVSRGYGAKAPQYPLVLDDNTPAKHCGDEPKLIYRRTAAPVAVDPVRANAVKALLETSVDIIITDDGLQHYALERDIEFVIVDGNRRFGNESLIPLGPLREGVERLSEVDFIITNGGQAQYGEMPMSLTPSKAINLKTKQQVEVSELRDLVAFAGIGHPPRFFNTLNAMNADVKVTKGFADHQDFDRQELQALAQQGANVIMTEKDAVKCDSYAQDNWWYLPVSAQFESNDAERILNRIKEVKATYGSPSA.

59-66 (TAGGNGKT) is a binding site for ATP.

This sequence belongs to the LpxK family.

The enzyme catalyses a lipid A disaccharide + ATP = a lipid IVA + ADP + H(+). Its pathway is glycolipid biosynthesis; lipid IV(A) biosynthesis; lipid IV(A) from (3R)-3-hydroxytetradecanoyl-[acyl-carrier-protein] and UDP-N-acetyl-alpha-D-glucosamine: step 6/6. Functionally, transfers the gamma-phosphate of ATP to the 4'-position of a tetraacyldisaccharide 1-phosphate intermediate (termed DS-1-P) to form tetraacyldisaccharide 1,4'-bis-phosphate (lipid IVA). This chain is Tetraacyldisaccharide 4'-kinase, found in Vibrio campbellii (strain ATCC BAA-1116).